Reading from the N-terminus, the 824-residue chain is A-adding tRNA nucleotidyltransferase (824 aa).

CBS domains follow at residues 305–363 (MNTP…DEPI) and 367–423 (VNRD…LEKL). 459-462 (GVVR) serves as a coordination point for ATP. Residues Asp-472 and Asp-474 each contribute to the Mg(2+) site. ATP is bound by residues 545–546 (RD), Asn-550, 590–599 (DPVRILRALR), Arg-603, and Arg-632.

It belongs to the tRNA nucleotidyltransferase/poly(A) polymerase family. Mg(2+) serves as cofactor.

The enzyme catalyses a tRNA with a 3' CC end + ATP = a tRNA with a 3' CCA end + diphosphate. TRNA nucleotidyltransferase involved in the synthesis of the tRNA CCA terminus. Adds the terminal adenosine residue to tRNA. Can incorporate CMP into tRNA ending with C74C75 (tRNACC), with very weak efficiency. In Aquifex aeolicus (strain VF5), this protein is A-adding tRNA nucleotidyltransferase.